The sequence spans 309 residues: Porphobilinogen deaminase (309 aa).

Cys240 bears the S-(dipyrrolylmethanemethyl)cysteine mark.

It belongs to the HMBS family. Monomer. Dipyrromethane serves as cofactor.

The enzyme catalyses 4 porphobilinogen + H2O = hydroxymethylbilane + 4 NH4(+). Its pathway is porphyrin-containing compound metabolism; protoporphyrin-IX biosynthesis; coproporphyrinogen-III from 5-aminolevulinate: step 2/4. Its function is as follows. Tetrapolymerization of the monopyrrole PBG into the hydroxymethylbilane pre-uroporphyrinogen in several discrete steps. The sequence is that of Porphobilinogen deaminase from Lawsonia intracellularis (strain PHE/MN1-00).